A 359-amino-acid chain; its full sequence is DNA polymerase IV (359 aa).

Positions 4–185 constitute a UmuC domain; sequence IIHIDMDCYF…LSLRKIPGVG (182 aa). The Mg(2+) site is built by aspartate 8 and aspartate 103. The active site involves glutamate 104.

The protein belongs to the DNA polymerase type-Y family. As to quaternary structure, monomer. Mg(2+) serves as cofactor.

It is found in the cytoplasm. The enzyme catalyses DNA(n) + a 2'-deoxyribonucleoside 5'-triphosphate = DNA(n+1) + diphosphate. Functionally, poorly processive, error-prone DNA polymerase involved in untargeted mutagenesis. Copies undamaged DNA at stalled replication forks, which arise in vivo from mismatched or misaligned primer ends. These misaligned primers can be extended by PolIV. Exhibits no 3'-5' exonuclease (proofreading) activity. May be involved in translesional synthesis, in conjunction with the beta clamp from PolIII. This is DNA polymerase IV from Shewanella sp. (strain MR-4).